Here is a 343-residue protein sequence, read N- to C-terminus: Dihydroorotase (343 aa).

2 residues coordinate Zn(2+): His-13 and His-15. Residues 15–17 (HLR) and Asn-41 contribute to the substrate site. Positions 99, 136, and 174 each coordinate Zn(2+). An N6-carboxylysine modification is found at Lys-99. Substrate is bound at residue His-136. Substrate is bound at residue Leu-219. Asp-247 contacts Zn(2+). Asp-247 is an active-site residue. Substrate-binding residues include His-251 and Ala-263.

It belongs to the metallo-dependent hydrolases superfamily. DHOase family. Class II DHOase subfamily. As to quaternary structure, homodimer. Zn(2+) is required as a cofactor.

The enzyme catalyses (S)-dihydroorotate + H2O = N-carbamoyl-L-aspartate + H(+). It functions in the pathway pyrimidine metabolism; UMP biosynthesis via de novo pathway; (S)-dihydroorotate from bicarbonate: step 3/3. Its function is as follows. Catalyzes the reversible cyclization of carbamoyl aspartate to dihydroorotate. This Shewanella putrefaciens (strain CN-32 / ATCC BAA-453) protein is Dihydroorotase.